The sequence spans 346 residues: Phenylalanine--tRNA ligase alpha subunit (346 aa).

Glu258 contacts Mg(2+).

This sequence belongs to the class-II aminoacyl-tRNA synthetase family. Phe-tRNA synthetase alpha subunit type 1 subfamily. In terms of assembly, tetramer of two alpha and two beta subunits. Mg(2+) serves as cofactor.

Its subcellular location is the cytoplasm. It catalyses the reaction tRNA(Phe) + L-phenylalanine + ATP = L-phenylalanyl-tRNA(Phe) + AMP + diphosphate + H(+). The protein is Phenylalanine--tRNA ligase alpha subunit of Protochlamydia amoebophila (strain UWE25).